Reading from the N-terminus, the 466-residue chain is Ribulose bisphosphate carboxylase large chain (466 aa).

Position 5 is an N6,N6,N6-trimethyllysine (Lys5). The substrate site is built by Asn114 and Thr164. Residue Lys166 is the Proton acceptor of the active site. Residue Lys168 participates in substrate binding. Mg(2+) contacts are provided by Lys192, Asp194, and Glu195. Position 192 is an N6-carboxylysine (Lys192). The Proton acceptor role is filled by His285. Substrate contacts are provided by Arg286, His318, and Ser370.

It belongs to the RuBisCO large chain family. Type I subfamily. In terms of assembly, heterohexadecamer of 8 large chains and 8 small chains; disulfide-linked. The disulfide link is formed within the large subunit homodimers. Mg(2+) is required as a cofactor. The disulfide bond which can form in the large chain dimeric partners within the hexadecamer appears to be associated with oxidative stress and protein turnover.

It localises to the plastid. The protein resides in the chloroplast. It catalyses the reaction 2 (2R)-3-phosphoglycerate + 2 H(+) = D-ribulose 1,5-bisphosphate + CO2 + H2O. The enzyme catalyses D-ribulose 1,5-bisphosphate + O2 = 2-phosphoglycolate + (2R)-3-phosphoglycerate + 2 H(+). Its function is as follows. RuBisCO catalyzes two reactions: the carboxylation of D-ribulose 1,5-bisphosphate, the primary event in carbon dioxide fixation, as well as the oxidative fragmentation of the pentose substrate in the photorespiration process. Both reactions occur simultaneously and in competition at the same active site. In Eremothamnus marlothianus, this protein is Ribulose bisphosphate carboxylase large chain.